A 521-amino-acid chain; its full sequence is Cell adhesion molecule CEACAM1 (521 aa).

Residues 1-34 (MELASAHLHKGQVPWGGLLLTASLLASWSPATTA) form the signal peptide. Positions 35-142 (EVTIEAVPPQ…QATVRFHVHP (108 aa)) constitute an Ig-like V-type domain. The Extracellular segment spans residues 35–428 (EVTIEAVPPQ…GGLSDGAIAG (394 aa)). The interval 39–142 (EAVPPQVAED…QATVRFHVHP (104 aa)) is required for homophilic binding. Residues asparagine 71, asparagine 89, asparagine 104, asparagine 148, asparagine 152, asparagine 199, asparagine 206, asparagine 210, asparagine 226, asparagine 258, asparagine 290, asparagine 294, asparagine 304, asparagine 317, asparagine 333, and asparagine 375 are each glycosylated (N-linked (GlcNAc...) asparagine). Ig-like C2-type domains are found at residues 147–234 (PNIT…FSLN), 239–319 (PDTP…KNIT), and 323–411 (PVTQ…IKLD). Cysteines 167 and 217 form a disulfide. Cysteine 261 and cysteine 301 are disulfide-bonded. Residues cysteine 346 and cysteine 394 are joined by a disulfide bond. A helical membrane pass occupies residues 429-447 (IVIGVVAGVALIAGLAYFL). The interaction with calmodulin stretch occupies residues 445-457 (YFLYSRKSGGGSD). The interaction with FLNA stretch occupies residues 447–521 (LYSRKSGGGS…ETVYSEVKKK (75 aa)). Residues 448 to 521 (YSRKSGGGSD…ETVYSEVKKK (74 aa)) are Cytoplasmic-facing. Residues 455–521 (GSDQRDLTEH…ETVYSEVKKK (67 aa)) are disordered. The segment covering 457–466 (DQRDLTEHKP) has biased composition (basic and acidic residues). Over residues 467–481 (STSNHNLAPSDNSPN) the composition is skewed to polar residues. Residues 484–521 (DDVAYTVLNFNSQQPNRPTSAPSSPRATETVYSEVKKK) are required for interaction with PTPN11 and PTPN6 and for control of phosphorylation level. Position 488 is a phosphotyrosine; by SRC, LCK, INSR and EGFR (tyrosine 488). Polar residues predominate over residues 491–514 (LNFNSQQPNRPTSAPSSPRATETV). A Phosphoserine modification is found at serine 503. Tyrosine 515 is subject to Phosphotyrosine; by INSR, SRC and LCK. Residues 515-518 (YSEV) are essential for interaction with PTPN11 and PTPN6.

This sequence belongs to the immunoglobulin superfamily. CEA family. As to quaternary structure, (Microbial infection) Interacts with MHV S1 spike glycoprotein. In terms of assembly, monomer. Oligomer. Heterodimer. Homodimer. Cis-dimer/oligomer (via Ig-like C2-type and/or via cytoplasmic domains); induced by trans-homophilic cell adhesion through an allosteric mechanism transmitted by the Ig-like V-type domain, and is regulated by intracellular calcium and calmodulin. Interacts (via cytoplasmic domain) with calmodulin in a calcium dependent manner; reduces homophilic cell adhesion through dissociation of dimer. Isoform 1 interacts (via cytoplasmic domain) with PTPN11 (preferentially) and PTPN6; cis-homodimer form is preferred; this interaction is decreased by formation of isoform 1 / isoform 2 cis-heterodimers and is dependent on the monomer/dimer equilibrium; this interaction is phosphorylation-dependent. Isoform 1 interacts with LYN. Isoform 1 interacts (via cytoplasmic domain) with SRC (via SH2 domain); this interaction is regulated by trans-homophilic cell adhesion. Isoform 1 interacts with LCK; mediates phosphorylation at Tyr-488 and Tyr-515 resulting in PTPN6 association. Isoform 1 interacts with PTPN6; this interaction is phosphorylation-dependent and causes a profound decrease in TCR stimulation-induced CD247 and ZAP70 phosphorylation. Isoform 1 interacts with TCR/CD3 complex through TCR beta chain and CD3E; colocalizes at the cell surface and upon stimulation of the TCR/CD3 complex recruits PTPN6 in the TCR/CD3 complex, resulting in dephosphorylation of CD247 and ZAP70. Isoform 1 interacts (via cytoplasmic domain) with SHC1 (via SH2 domain); SHC1 mediates interaction with INSR or EGFR in a Ser-503 phosphorylation-dependent manner. Isoform 1 interacts with EGFR; the interaction is indirect. Isoform 1 interacts with CSF3R; down-regulates the CSF3R-STAT3 pathway through recruitment of PTPN6 that dephosphorylates CSF3R. Isoform 1 (phosphorylated form) interacts with TLR4 and SYK; recruits PTPN6 that dephosphorylates SYK, reducing the production of reactive oxygen species (ROS) and lysosome disruption, leading to a reduction of the inflammasome activity. Isoform 1 interacts with FLNA; inhibits cell migration and cell scattering by interfering with the interaction of FLNA with RALA. Isoform 1 interacts (via cytoplasmic domain) with PXN; the interaction is phosphotyrosyl-dependent. Isoform 1 interacts with KLRK1; recruits PTPN6 that dephosphorylates VAV1. Isoform 1 interacts with CEACAM8. Isoform 1 interacts with FASN; this interaction is insulin and phosphorylation-dependent; reduces fatty-acid synthase activity. Interacts (via Ig-like V-type) with HAVCR2 (via Ig-like V-type); facilitates the maturation and cell surface expression of HAVCR2 thereby regulating T-cell tolerance induction. Isoform 2 interacts (via the cytoplasmic domain) with ANXA2; this interaction is regulated by phosphorylation and appears in the AIIt complex. Interacts (via Lewis X moieties) with CD209 (via C-type lectin domain); this interaction is regulated by the glycosylation pattern of CEACAM1 on cell types and regulates contact between dendritic cells and neutrophils. Phosphorylated on serine and tyrosine. Isoform 1 is phosphorylated on tyrosine by Src family kinases like SRC and LCK and by receptor like CSF3R, EGFR and INSR upon stimulation. Phosphorylated at Ser-503; mediates activity. Phosphorylated at Tyr-488; regulates activity. Phosphorylated at Tyr-488 by EGFR and INSR upon stimulation; this phosphorylation is Ser-503-phosphorylation-dependent; mediates cellular internalization; increases interaction with FASN. Phosphorylated at Tyr-488 and Tyr-515 by LCK; mediates PTPN6 association and is regulated by homophilic ligation of CEACAM1 in the absence of T-cell activation. Phosphorylated at Tyr-515; mediates interaction with PTPN11. Post-translationally, phosphorylated on serine and threonine. Expressed in granulocytes, lymphocytes, granulocytes, B cells, and T-cells. Expressed in bone. Highly expressed in liver and femur. Highly expressed in neutrophils, and to a lesser extent inmonocytes, and macrophages. Slightly higher expressed in peripheral blood neutrophils (PBNs). Intestinal T-cells predominantly express isoform 2 while extraintestinal T-cells mainly express isoform 1. Expressed in small intestine and colon.

It localises to the cell membrane. It is found in the lateral cell membrane. The protein localises to the apical cell membrane. The protein resides in the basal cell membrane. Its subcellular location is the cell junction. It localises to the adherens junction. It is found in the cytoplasmic vesicle. The protein localises to the secretory vesicle. The protein resides in the cell projection. Its subcellular location is the microvillus membrane. In terms of biological role, cell adhesion protein that mediates homophilic cell adhesion in a calcium-independent manner. Plays a role as coinhibitory receptor in immune response, insulin action and also functions as an activator during angiogenesis. Its coinhibitory receptor function is phosphorylation- and PTPN6 -dependent, which in turn, suppress signal transduction of associated receptors by dephosphorylation of their downstream effectors. Plays a role in immune response, of T-cells, natural killer (NK) and neutrophils. Upon TCR/CD3 complex stimulation, inhibits TCR-mediated cytotoxicity by blocking granule exocytosis by mediating homophilic binding to adjacent cells, allowing interaction with and phosphorylation by LCK and interaction with the TCR/CD3 complex which recruits PTPN6 resulting in dephosphorylation of CD247 and ZAP70. Also inhibits T-cell proliferation and cytokine production through inhibition of JNK cascade and plays a crucial role in regulating autoimmunity and anti-tumor immunity by inhibiting T-cell through its interaction with HAVCR2. Upon natural killer (NK) cells activation, inhibit KLRK1-mediated cytolysis of CEACAM1-bearing tumor cells by trans-homophilic interactions with CEACAM1 on the target cell and lead to cis-interaction between CEACAM1 and KLRK1, allowing PTPN6 recruitment and then VAV1 dephosphorylation. Upon neutrophils activation negatively regulates IL1B production by recruiting PTPN6 to a SYK-TLR4-CEACAM1 complex, that dephosphorylates SYK, reducing the production of reactive oxygen species (ROS) and lysosome disruption, which in turn, reduces the activity of the inflammasome. Down-regulates neutrophil production by acting as a coinhibitory receptor for CSF3R by downregulating the CSF3R-STAT3 pathway through recruitment of PTPN6 that dephosphorylates CSF3R. Also regulates insulin action by promoting INS clearance and regulating lipogenesis in liver through regulating insulin signaling. Upon INS stimulation, undergoes phosphorylation by INSR leading to INS clearance by increasing receptor-mediated insulin endocytosis. This inernalization promotes interaction with FASN leading to receptor-mediated insulin degradation and to reduction of FASN activity leading to negative regulation of fatty acid synthesis. INSR-mediated phosphorylation also provokes a down-regulation of cell proliferation through SHC1 interaction resulting in decrease coupling of SHC1 to the MAPK3/ERK1-MAPK1/ERK2 and phosphatidylinositol 3-kinase pathways. Functions as activator in angiogenesis by promoting blood vessel remodeling through endothelial cell differentiation and migration and in arteriogenesis by increasing the number of collateral arteries and collateral vessel calibers after ischemia. Also regulates vascular permeability through the VEGFR2 signaling pathway resulting in control of nitric oxide production. Down-regulates cell growth in response to EGF through its interaction with SHC1 that mediates interaction with EGFR resulting in decrease coupling of SHC1 to the MAPK3/ERK1-MAPK1/ERK2 pathway. Negatively regulates platelet aggregation by decreasing platelet adhesion on type I collagen through the GPVI-FcRgamma complex. Inhibits cell migration and cell scattering through interaction with FLNA; interferes with the interaction of FLNA with RALA. Mediates bile acid transport activity in a phosphorylation dependent manner. Negatively regulates osteoclastogenesis. Its function is as follows. Cell adhesion protein that mediates homophilic cell adhesion in a calcium-independent manner. Promotes populations of T-cells regulating IgA production and secretion associated with control of the commensal microbiota and resistance to enteropathogens. (Microbial infection) In case of murine coronavirus (MHV) infection, serves as receptor for MHV S1 spike glycoprotein. The polypeptide is Cell adhesion molecule CEACAM1 (Mus musculus (Mouse)).